Here is a 107-residue protein sequence, read N- to C-terminus: Ig kappa chain V-VI region NQ2-17.4.1 (107 aa).

Positions glutamine 1–cysteine 23 are framework-1. Cysteine 23 and cysteine 87 are disulfide-bonded. The complementarity-determining-1 stretch occupies residues serine 24–histidine 33. The tract at residues tryptophan 34–tyrosine 48 is framework-2. Residues aspartate 49–serine 55 are complementarity-determining-2. The segment at glycine 56–cysteine 87 is framework-3. The segment at glutamine 88–threonine 96 is complementarity-determining-3. A framework-4 region spans residues phenylalanine 97 to lysine 106.

Its function is as follows. Anti-2-phenyl oxazolone (PHOX) Antibody. The chain is Ig kappa chain V-VI region NQ2-17.4.1 from Mus musculus (Mouse).